The primary structure comprises 213 residues: Peptidyl-prolyl cis-trans isomerase B (213 aa).

A signal peptide spans 1–23 (MAVLRVLCGLLLVSILFLGFVLS). One can recognise a PPIase cyclophilin-type domain in the interval 35–197 (FFDIEVDEQP…KSVKIANCGH (163 aa)). Positions 210 to 213 (DAAE) match the Prevents secretion from ER motif.

Belongs to the cyclophilin-type PPIase family. PPIase B subfamily.

Its subcellular location is the endoplasmic reticulum lumen. The enzyme catalyses [protein]-peptidylproline (omega=180) = [protein]-peptidylproline (omega=0). With respect to regulation, inhibited by cyclosporin A (CsA). Functionally, PPIases accelerate the folding of proteins. It catalyzes the cis-trans isomerization of proline imidic peptide bonds in oligopeptides. This Schistosoma japonicum (Blood fluke) protein is Peptidyl-prolyl cis-trans isomerase B.